The sequence spans 915 residues: DNA (cytosine-5)-methyltransferase 3 (915 aa).

Positions 1–14 (MAPSSPSSARPTRA) are enriched in low complexity. Disordered regions lie at residues 1-107 (MAPS…AEEQ) and 152-171 (HSNWPKRYERSTAANKPEED). Basic and acidic residues predominate over residues 21 to 30 (AMAEEIHQNQ). The segment covering 42-57 (AKRRRKAASSGKKPKP) has biased composition (basic residues). Residues 71–80 (KKGETEKTEP) show a composition bias toward basic and acidic residues. Residues 81 to 107 (VVDDVCAEEPDEEELAMGEEEAEAEEQ) are compositionally biased toward acidic residues. The 126-residue stretch at 188 to 313 (IVYCLGDDVY…VAYSTFANIS (126 aa)) folds into the BAH domain. A compositionally biased stretch (polar residues) spans 315-328 (ENGQSGSETASGIS). A disordered region spans residues 315–338 (ENGQSGSETASGISSDDAGLETSS). An SAM-dependent MTase C5-type domain is found at 345 to 876 (ATLLDLYSGC…YCLGQAYLGE (532 aa)). The Chromo domain maps to 445 to 508 (FVVQKLIGIR…EGRKRKILPL (64 aa)). The active site involves Cys521.

It belongs to the class I-like SAM-binding methyltransferase superfamily. C5-methyltransferase family.

The protein resides in the nucleus. It carries out the reaction a 2'-deoxycytidine in DNA + S-adenosyl-L-methionine = a 5-methyl-2'-deoxycytidine in DNA + S-adenosyl-L-homocysteine + H(+). May be involved in the CpXpG methylation and in gene silencing. This is DNA (cytosine-5)-methyltransferase 3 (DMT105) from Zea mays (Maize).